The sequence spans 152 residues: Superoxide dismutase [Cu-Zn] (152 aa).

A lipid anchor (S-palmitoyl cysteine) is attached at C7. Cu cation is bound by residues H47, H49, and H64. An intrachain disulfide couples C58 to C146. Zn(2+) contacts are provided by H64, H72, H81, and D84. Position 120 (H120) interacts with Cu cation.

It belongs to the Cu-Zn superoxide dismutase family. Homodimer. The cofactor is Cu cation. Requires Zn(2+) as cofactor.

It localises to the cytoplasm. Its subcellular location is the nucleus. It catalyses the reaction 2 superoxide + 2 H(+) = H2O2 + O2. In terms of biological role, destroys radicals which are normally produced within the cells and which are toxic to biological systems. The polypeptide is Superoxide dismutase [Cu-Zn] (sod1) (Xiphias gladius (Swordfish)).